Reading from the N-terminus, the 438-residue chain is Proline--tRNA ligase (438 aa).

It belongs to the class-II aminoacyl-tRNA synthetase family. ProS type 2 subfamily. As to quaternary structure, homodimer.

Its subcellular location is the cytoplasm. The catalysed reaction is tRNA(Pro) + L-proline + ATP = L-prolyl-tRNA(Pro) + AMP + diphosphate. Its function is as follows. Catalyzes the attachment of proline to tRNA(Pro) in a two-step reaction: proline is first activated by ATP to form Pro-AMP and then transferred to the acceptor end of tRNA(Pro). The polypeptide is Proline--tRNA ligase (Gluconobacter oxydans (strain 621H) (Gluconobacter suboxydans)).